A 270-amino-acid chain; its full sequence is uncharacterized protein (270 aa).

The first 23 residues, 1 to 23 (MFNFITFILFAVVCISYCHKSRG), serve as a signal peptide directing secretion. Residues N246 and N252 are each glycosylated (N-linked (GlcNAc...) asparagine).

Its subcellular location is the secreted. This is an uncharacterized protein from Caenorhabditis elegans.